We begin with the raw amino-acid sequence, 259 residues long: Putative protein-tyrosine sulfotransferase (259 aa).

A disulfide bond links cysteine 13 and cysteine 68. Residue glutamate 16 is the Proton donor/acceptor of the active site. Asparagine 36 is a glycosylation site (N-linked (GlcNAc...) asparagine). Residues arginine 95, serine 103, and arginine 107 each contribute to the 3'-phosphoadenylyl sulfate site. N-linked (GlcNAc...) asparagine glycosylation occurs at asparagine 115. Cysteines 137 and 144 form a disulfide. Residues tyrosine 149 and 194 to 203 (SASQVKNSIN) contribute to the 3'-phosphoadenylyl sulfate site.

It belongs to the protein sulfotransferase family.

The catalysed reaction is L-tyrosyl-[protein] + 3'-phosphoadenylyl sulfate = O-sulfo-L-tyrosine-[protein] + adenosine 3',5'-bisphosphate + H(+). Functionally, catalyzes the O-sulfation of tyrosine residues within acidic motifs of polypeptides, using 3'-phosphoadenylyl sulfate (PAPS) as cosubstrate. This is Putative protein-tyrosine sulfotransferase (tpst-2) from Caenorhabditis elegans.